Here is a 154-residue protein sequence, read N- to C-terminus: MKPLRLIAVGQVRTPYFREACAHYLTAVRRYLPAEEILARDGKSADPARRKAEEAKAVLAALAPRDFVVVLDEHGPSLPSTELAALLKKRIEDPGRAPAFVIGGPFGLDKAVLDRADRLLALGPGTLPHELARVVLYEQLYRAASINAGAPYHH.

The S-adenosyl-L-methionine site is built by Leu-71 and Gly-103.

This sequence belongs to the RNA methyltransferase RlmH family. As to quaternary structure, homodimer.

It localises to the cytoplasm. It catalyses the reaction pseudouridine(1915) in 23S rRNA + S-adenosyl-L-methionine = N(3)-methylpseudouridine(1915) in 23S rRNA + S-adenosyl-L-homocysteine + H(+). Functionally, specifically methylates the pseudouridine at position 1915 (m3Psi1915) in 23S rRNA. The sequence is that of Ribosomal RNA large subunit methyltransferase H from Solidesulfovibrio magneticus (strain ATCC 700980 / DSM 13731 / RS-1) (Desulfovibrio magneticus).